A 212-amino-acid polypeptide reads, in one-letter code: Peptide methionine sulfoxide reductase MsrA (212 aa).

Residue C52 is part of the active site.

It belongs to the MsrA Met sulfoxide reductase family.

It catalyses the reaction L-methionyl-[protein] + [thioredoxin]-disulfide + H2O = L-methionyl-(S)-S-oxide-[protein] + [thioredoxin]-dithiol. The enzyme catalyses [thioredoxin]-disulfide + L-methionine + H2O = L-methionine (S)-S-oxide + [thioredoxin]-dithiol. Has an important function as a repair enzyme for proteins that have been inactivated by oxidation. Catalyzes the reversible oxidation-reduction of methionine sulfoxide in proteins to methionine. This Salmonella schwarzengrund (strain CVM19633) protein is Peptide methionine sulfoxide reductase MsrA.